Consider the following 334-residue polypeptide: Ornithine carbamoyltransferase (334 aa).

Residues 57 to 60 (STRT), Q84, R108, and 135 to 138 (HPTQ) contribute to the carbamoyl phosphate site. Residues N169, D233, and 237–238 (SM) contribute to the L-ornithine site. Residues 275–276 (CL) and R320 contribute to the carbamoyl phosphate site.

This sequence belongs to the aspartate/ornithine carbamoyltransferase superfamily. OTCase family.

It localises to the cytoplasm. The catalysed reaction is carbamoyl phosphate + L-ornithine = L-citrulline + phosphate + H(+). The protein operates within amino-acid biosynthesis; L-arginine biosynthesis; L-arginine from L-ornithine and carbamoyl phosphate: step 1/3. Reversibly catalyzes the transfer of the carbamoyl group from carbamoyl phosphate (CP) to the N(epsilon) atom of ornithine (ORN) to produce L-citrulline. The polypeptide is Ornithine carbamoyltransferase (Vibrio vulnificus (strain YJ016)).